A 125-amino-acid chain; its full sequence is RxLR effector protein Avh6 (125 aa).

The N-terminal stretch at Met1–Ala25 is a signal peptide. The RxLR-dEER motif lies at Arg48–Arg70.

Belongs to the RxLR effector family.

Its subcellular location is the secreted. It is found in the host cell. Functionally, effector that suppresses plant defense responses during the early stages of pathogen infection. Suppresses cell death induced by effectors and PAMPs in plant hosts. Triggers a hypersensitive response (HR) in the presence of Rps1d. Suppresses BAX-induced cell death and enhanced P.capsici infection in Nicotiana benthamiana. Also suppresses effector-triggered immunity induction by associating with Avr1b and Rps1b, suggesting a role in suppressing plant immunity. The polypeptide is RxLR effector protein Avh6 (Phytophthora sojae (Soybean stem and root rot agent)).